A 425-amino-acid chain; its full sequence is Histidine--tRNA ligase (425 aa).

Belongs to the class-II aminoacyl-tRNA synthetase family. Homodimer.

It is found in the cytoplasm. It catalyses the reaction tRNA(His) + L-histidine + ATP = L-histidyl-tRNA(His) + AMP + diphosphate + H(+). The sequence is that of Histidine--tRNA ligase from Chlorobium chlorochromatii (strain CaD3).